The primary structure comprises 84 residues: Conotoxin Am6.1 (84 aa).

Residues 1–19 form the signal peptide; sequence MEKLTILLLVAAVLMSTHA. Residues 20 to 47 constitute a propeptide that is removed on maturation; that stretch reads MFQGGGEKSRKAINFSETRKLARNKQKR. Disulfide bonds link C48–C62, C55–C66, and C61–C71. 6'-bromotryptophan; in Am6.1b is present on W51. 4-carboxyglutamate; partial; in Am6.1b and Am6.1c is present on residues E60 and E64. The propeptide occupies 78–84; it reads RTTSHPI.

Belongs to the conotoxin O2 family. In terms of processing, three forms of this peptides have been described. The unmodified Am6.1a (Am3286) is not detected in the venom; Am6.1b (Am3408) is only Trp brominated, while Am6.1c (Am3452) is both Trp brominated and Glu gamma-carboxyglutamated. Both Am6.1b and Am6.1c are detected in the venom. In terms of tissue distribution, expressed by the venom duct.

The protein resides in the secreted. Functionally, gamma-conotoxins may act on voltage-gated non-specific cation pacemaker channels (HCN). In Conus amadis (Amadis cone), this protein is Conotoxin Am6.1.